A 463-amino-acid polypeptide reads, in one-letter code: Bifunctional protein HldE (463 aa).

Residues 1–315 (MKKILVIGDL…LILNQTHPKI (315 aa)) form a ribokinase region. Position 191-194 (191-194 (NRAE)) interacts with ATP. Asp260 is an active-site residue. The cytidylyltransferase stretch occupies residues 334–463 (FTNGCFDLLH…IEKIKRTHND (130 aa)).

The protein in the N-terminal section; belongs to the carbohydrate kinase PfkB family. In the C-terminal section; belongs to the cytidylyltransferase family. Homodimer.

It catalyses the reaction D-glycero-beta-D-manno-heptose 7-phosphate + ATP = D-glycero-beta-D-manno-heptose 1,7-bisphosphate + ADP + H(+). The enzyme catalyses D-glycero-beta-D-manno-heptose 1-phosphate + ATP + H(+) = ADP-D-glycero-beta-D-manno-heptose + diphosphate. The protein operates within nucleotide-sugar biosynthesis; ADP-L-glycero-beta-D-manno-heptose biosynthesis; ADP-L-glycero-beta-D-manno-heptose from D-glycero-beta-D-manno-heptose 7-phosphate: step 1/4. It functions in the pathway nucleotide-sugar biosynthesis; ADP-L-glycero-beta-D-manno-heptose biosynthesis; ADP-L-glycero-beta-D-manno-heptose from D-glycero-beta-D-manno-heptose 7-phosphate: step 3/4. Its function is as follows. Catalyzes the phosphorylation of D-glycero-D-manno-heptose 7-phosphate at the C-1 position to selectively form D-glycero-beta-D-manno-heptose-1,7-bisphosphate. Catalyzes the ADP transfer from ATP to D-glycero-beta-D-manno-heptose 1-phosphate, yielding ADP-D-glycero-beta-D-manno-heptose. This is Bifunctional protein HldE from Helicobacter pylori (strain HPAG1).